A 156-amino-acid polypeptide reads, in one-letter code: Small ribosomal subunit protein uS7 (156 aa).

This sequence belongs to the universal ribosomal protein uS7 family. In terms of assembly, part of the 30S ribosomal subunit. Contacts proteins S9 and S11.

In terms of biological role, one of the primary rRNA binding proteins, it binds directly to 16S rRNA where it nucleates assembly of the head domain of the 30S subunit. Is located at the subunit interface close to the decoding center, probably blocks exit of the E-site tRNA. This is Small ribosomal subunit protein uS7 from Aliivibrio salmonicida (strain LFI1238) (Vibrio salmonicida (strain LFI1238)).